We begin with the raw amino-acid sequence, 182 residues long: ATP-dependent protease subunit HslV (182 aa).

Thr10 is an active-site residue. 3 residues coordinate Na(+): Ala166, Cys169, and Ser172.

The protein belongs to the peptidase T1B family. HslV subfamily. A double ring-shaped homohexamer of HslV is capped on each side by a ring-shaped HslU homohexamer. The assembly of the HslU/HslV complex is dependent on binding of ATP.

The protein localises to the cytoplasm. It carries out the reaction ATP-dependent cleavage of peptide bonds with broad specificity.. With respect to regulation, allosterically activated by HslU binding. Functionally, protease subunit of a proteasome-like degradation complex believed to be a general protein degrading machinery. The chain is ATP-dependent protease subunit HslV from Rickettsia africae (strain ESF-5).